The following is a 121-amino-acid chain: Basic phospholipase A2 homolog piratoxin-1 (121 aa).

7 cysteine pairs are disulfide-bonded: Cys-26–Cys-115, Cys-28–Cys-44, Cys-43–Cys-95, Cys-49–Cys-121, Cys-50–Cys-88, Cys-57–Cys-81, and Cys-75–Cys-86. The interval 105 to 117 (KLYRYHLKPFCKK) is important for membrane-damaging activities in eukaryotes and bacteria; heparin-binding.

Belongs to the phospholipase A2 family. Group II subfamily. K49 sub-subfamily. As to quaternary structure, homodimer; non-covalently linked. In terms of tissue distribution, expressed by the venom gland.

The protein localises to the secreted. Its activity is regulated as follows. Rosmarinic acid inhibits the myotoxic activity. Bromophenacyl bromide (BPB) inhibits the myotoxic activity through a covalent binding. Caffeic acid and aristolochic acid, two plant compounds used in folk medicine used to treat envenomation, inhibit the myotoxic activity. In terms of biological role, snake venom phospholipase A2 (PLA2) homolog that lacks enzymatic activity. Is myotoxic and displays edema-inducing activities. Induces neuromuscular blockage. A model of myotoxic mechanism has been proposed: an apo Lys49-PLA2 is activated by the entrance of a hydrophobic molecule (e.g. fatty acid) at the hydrophobic channel of the protein leading to a reorientation of a monomer. This reorientation causes a transition between 'inactive' to 'active' states, causing alignment of C-terminal and membrane-docking sites (MDoS) side-by-side and putting the membrane-disruption sites (MDiS) in the same plane, exposed to solvent and in a symmetric position for both monomers. The MDoS region stabilizes the toxin on membrane by the interaction of charged residues with phospholipid head groups. Subsequently, the MDiS region destabilizes the membrane with penetration of hydrophobic residues. This insertion causes a disorganization of the membrane, allowing an uncontrolled influx of ions (i.e. calcium and sodium), and eventually triggering irreversible intracellular alterations and cell death. The protein is Basic phospholipase A2 homolog piratoxin-1 of Bothrops pirajai (Piraja's lancehead).